Here is a 633-residue protein sequence, read N- to C-terminus: MYCNICKRNDFKNEHGLNIHKAKVHGIRKQHESAHPPRERHTERTATKRSDETKTASRPTASHEGKTHTTNPRGQVHPHTSNDVVRQSAMIVQMEAIQKCPLLGNHFKGPADVHPQRTKTPSGARKPETPKKPHSATKDDHRTKTPGTPHSADTRTPSSTGTDFGGVRPKTPRGARKPDTPKKPHSATKDDHRTKTPGTPHSADTRTPSSTDPFICPICDGKSFKYEGWFIKHMENKHPGCAFGVVAKGREDDKSDQEKRDSWKRREGSVDDRPSSVAPNFADSFNIKTFEKWVTVAEASIIRQKTDTDETIDCMNRFIKMLESTMNGISHFPLKTFKSGSYYDRTKIDYNDEFDFMFFPDMKMEAVFTNCPPGYCKIRKGVTNSKDLDPYLNKDGFLVPGLFKQAMFDLFEKSLSDGTFREGRRTTRQTSKPGSPAYTILYNLGIHGKRPIDVDLVPAIRIECWPKPAKEIKPDWVKKETTERATRCFHAVMKTYPENWPDGDLLWRISFTHAEKELILHANEKEKGCRKDIFRLLKKIKEVMKSRNSNDIDKFCSYHLKMFMLKFFDKEKYFRNEMKVDLLKKAIKKLGESVEHGNIPNYFIPEDNVIVNVLEKERTLIAKELRALLEGNW.

Disordered stretches follow at residues 23 to 80 (KVHG…HPHT), 107 to 214 (FKGP…TDPF), and 250 to 276 (REDD…RPSS). The span at 29–67 (KQHESAHPPRERHTERTATKRSDETKTASRPTASHEGKT) shows a compositional bias: basic and acidic residues. Over residues 68-80 (HTTNPRGQVHPHT) the composition is skewed to polar residues. Composition is skewed to basic and acidic residues over residues 125 to 143 (RKPE…DHRT), 176 to 194 (RKPD…DHRT), and 250 to 274 (REDD…DDRP). Mg(2+)-binding residues include glutamate 353, aspartate 355, and aspartate 455.

This sequence belongs to the mab-21 family. Mg(2+) is required as a cofactor. Mn(2+) serves as cofactor.

It catalyses the reaction UTP + ATP = 2',3'-cUAMP + 2 diphosphate. Functionally, nucleotidyltransferase that catalyzes the formation of cyclic UMP-AMP (2',3'-cUAMP) from ATP and UTP and plays a key role in innate immunity. Acts as a key sensor of double-stranded DNA (dsDNA), the presence of dsDNA in the cytoplasm being a danger signal that triggers the immune responses. Directly binds dsDNA, activating the nucleotidyltransferase activity, leading to synthesis of 2',3'-cUAMP, a second messenger that binds to and activates Sting, thereby triggering the immune response via activation of the NF-kappa-B transcription factor. The protein is Cyclic GMP-AMP synthase-like receptor 1 of Crassostrea virginica (Eastern oyster).